We begin with the raw amino-acid sequence, 309 residues long: Ribonuclease Z (309 aa).

Zn(2+)-binding residues include His63, His65, Asp67, His68, His145, Asp216, and His274. Asp67 serves as the catalytic Proton acceptor.

It belongs to the RNase Z family. As to quaternary structure, homodimer. Zn(2+) serves as cofactor.

It carries out the reaction Endonucleolytic cleavage of RNA, removing extra 3' nucleotides from tRNA precursor, generating 3' termini of tRNAs. A 3'-hydroxy group is left at the tRNA terminus and a 5'-phosphoryl group is left at the trailer molecule.. Its function is as follows. Zinc phosphodiesterase, which displays some tRNA 3'-processing endonuclease activity. Probably involved in tRNA maturation, by removing a 3'-trailer from precursor tRNA. This chain is Ribonuclease Z, found in Streptococcus pyogenes serotype M1.